Reading from the N-terminus, the 422-residue chain is Dihydroorotase (422 aa).

H59 and H61 together coordinate Zn(2+). Substrate-binding positions include 61-63 and N93; that span reads HFR. Positions 150, 177, and 230 each coordinate Zn(2+). N276 is a substrate binding site. D303 provides a ligand contact to Zn(2+). Residue D303 is part of the active site. H307 contributes to the substrate binding site.

It belongs to the metallo-dependent hydrolases superfamily. DHOase family. Class I DHOase subfamily. It depends on Zn(2+) as a cofactor.

It carries out the reaction (S)-dihydroorotate + H2O = N-carbamoyl-L-aspartate + H(+). It participates in pyrimidine metabolism; UMP biosynthesis via de novo pathway; (S)-dihydroorotate from bicarbonate: step 3/3. Catalyzes the reversible cyclization of carbamoyl aspartate to dihydroorotate. The polypeptide is Dihydroorotase (Streptococcus pneumoniae serotype 4 (strain ATCC BAA-334 / TIGR4)).